We begin with the raw amino-acid sequence, 357 residues long: Ubiquitin carboxyl-terminal hydrolase 2 (357 aa).

The 333-residue stretch at 19–351 (TGLRNLGNTC…DAYLLFYELA (333 aa)) folds into the USP domain. Catalysis depends on cysteine 28, which acts as the Nucleophile. Zn(2+) contacts are provided by cysteine 177, cysteine 180, cysteine 228, and cysteine 231. The active-site Proton acceptor is histidine 309.

It belongs to the peptidase C19 family. USP2 subfamily. Homooligomer.

The protein resides in the cytoplasm. Its subcellular location is the perinuclear region. The enzyme catalyses Thiol-dependent hydrolysis of ester, thioester, amide, peptide and isopeptide bonds formed by the C-terminal Gly of ubiquitin (a 76-residue protein attached to proteins as an intracellular targeting signal).. Hydrolase that deubiquitinates polyubiquitinated target proteins such as MDM2, MDM4 and CCND1. Possesses both ubiquitin-specific peptidase and isopeptidase activities. May play a role in the regulation of the circadian clock. This is Ubiquitin carboxyl-terminal hydrolase 2 (USP2) from Gallus gallus (Chicken).